The sequence spans 185 residues: GTP-dependent dephospho-CoA kinase (185 aa).

The GTP site is built by Asp-50, Val-52, Asp-73, Lys-75, and Glu-128.

Belongs to the GTP-dependent DPCK family.

It catalyses the reaction 3'-dephospho-CoA + GTP = GDP + CoA + H(+). It functions in the pathway cofactor biosynthesis; coenzyme A biosynthesis. Functionally, catalyzes the GTP-dependent phosphorylation of the 3'-hydroxyl group of dephosphocoenzyme A to form coenzyme A (CoA). This Aeropyrum pernix (strain ATCC 700893 / DSM 11879 / JCM 9820 / NBRC 100138 / K1) protein is GTP-dependent dephospho-CoA kinase.